The sequence spans 163 residues: Nucleotide-binding protein PMI0103 (163 aa).

This sequence belongs to the YajQ family.

Nucleotide-binding protein. This is Nucleotide-binding protein PMI0103 from Proteus mirabilis (strain HI4320).